Here is a 142-residue protein sequence, read N- to C-terminus: Hemoglobin subunit alpha (142 aa).

N-acetylserine is present on Ser-1. One can recognise a Globin domain in the interval 1–142 (SLSDKDKAAV…VALALAERYR (142 aa)). His-59 contributes to the O2 binding site. His-88 contacts heme b.

This sequence belongs to the globin family. As to quaternary structure, hb1 is a heterotetramer of two alpha chains and two beta-1 chains, while Hb2 is a heterotetramer of two alpha chains and two beta-2 chains. As to expression, red blood cells.

Its function is as follows. Involved in oxygen transport from gills to the various peripheral tissues. The chain is Hemoglobin subunit alpha (hba) from Cygnodraco mawsoni (Antarctic dragonfish).